The following is a 421-amino-acid chain: Serine--tRNA ligase (421 aa).

230–232 (TAE) lines the L-serine pocket. Residue 261–263 (RRE) coordinates ATP. Glutamate 284 serves as a coordination point for L-serine. Position 348-351 (348-351 (EISS)) interacts with ATP. Position 383 (serine 383) interacts with L-serine.

The protein belongs to the class-II aminoacyl-tRNA synthetase family. Type-1 seryl-tRNA synthetase subfamily. As to quaternary structure, homodimer. The tRNA molecule binds across the dimer.

The protein resides in the cytoplasm. It catalyses the reaction tRNA(Ser) + L-serine + ATP = L-seryl-tRNA(Ser) + AMP + diphosphate + H(+). It carries out the reaction tRNA(Sec) + L-serine + ATP = L-seryl-tRNA(Sec) + AMP + diphosphate + H(+). The protein operates within aminoacyl-tRNA biosynthesis; selenocysteinyl-tRNA(Sec) biosynthesis; L-seryl-tRNA(Sec) from L-serine and tRNA(Sec): step 1/1. Its function is as follows. Catalyzes the attachment of serine to tRNA(Ser). Is also able to aminoacylate tRNA(Sec) with serine, to form the misacylated tRNA L-seryl-tRNA(Sec), which will be further converted into selenocysteinyl-tRNA(Sec). The sequence is that of Serine--tRNA ligase from Finegoldia magna (strain ATCC 29328 / DSM 20472 / WAL 2508) (Peptostreptococcus magnus).